The following is a 255-amino-acid chain: Na(+)-translocating NADH-quinone reductase subunit C (255 aa).

Residues 12–32 (LFVVIALSLVCSIIVSTAAVG) form a helical membrane-spanning segment. An FMN phosphoryl threonine modification is found at T223.

It belongs to the NqrC family. As to quaternary structure, composed of six subunits; NqrA, NqrB, NqrC, NqrD, NqrE and NqrF. The cofactor is FMN.

Its subcellular location is the cell inner membrane. The catalysed reaction is a ubiquinone + n Na(+)(in) + NADH + H(+) = a ubiquinol + n Na(+)(out) + NAD(+). In terms of biological role, NQR complex catalyzes the reduction of ubiquinone-1 to ubiquinol by two successive reactions, coupled with the transport of Na(+) ions from the cytoplasm to the periplasm. NqrA to NqrE are probably involved in the second step, the conversion of ubisemiquinone to ubiquinol. The protein is Na(+)-translocating NADH-quinone reductase subunit C of Vibrio anguillarum (Listonella anguillarum).